The sequence spans 919 residues: Kinesin-like protein KIN-UA (919 aa).

Residues 1 to 68 form a disordered region; it reads MSTTSGTGGV…SGGGGDAGVP (68 aa). Over residues 15–51 the composition is skewed to low complexity; it reads GTQRSSLRTQSSASTSSGGQKASVKSKSVLRKSSPAA. A compositionally biased stretch (gly residues) spans 52–66; sequence LGGGSSKSGGGGDAG. Residues 70–412 enclose the Kinesin motor domain; it reads RVRVAVRLRP…IMFGQRAMKV (343 aa). 155–162 provides a ligand contact to ATP; that stretch reads GQTGTGKT. The tract at residues 286 to 305 is disordered; that stretch reads TRDGLSSESNGNSHMTKSLK. A compositionally biased stretch (polar residues) spans 291–301; the sequence is SSESNGNSHMT. Residues 382-390 carry the D-BOX motif; it reads RTSLVITIG. Coiled-coil stretches lie at residues 428–492 and 530–621; these read SRRL…SIKK and ALEE…LEQH. ARM repeat units lie at residues 650-689, 691-731, 733-773, and 775-814; these read KPPV…NLAA, EANQ…NLAM, ETNQ…NLCG, and DKLQ…NFAK.

This sequence belongs to the TRAFAC class myosin-kinesin ATPase superfamily. Kinesin family. Ungrouped subfamily. Interacts (via C-terminus) with NEK5. In terms of tissue distribution, expressed in leaves, guard cells, trichomes, vascular tissues, stele of the root tip region and columella cells. Highest expression detected in guard cells.

It localises to the cytoplasm. Its subcellular location is the cytoskeleton. The sequence is that of Kinesin-like protein KIN-UA from Arabidopsis thaliana (Mouse-ear cress).